Reading from the N-terminus, the 266-residue chain is uncharacterized protein (266 aa).

This is an uncharacterized protein from Ostreid herpesvirus 1 (isolate France) (OsHV-1).